We begin with the raw amino-acid sequence, 294 residues long: MLKGAVTALITPFDDNGAIDEKAFCNFVEWQITQGINGVSPVGTTGESPTLSHEERKQVVELCVEQVAKRVPVVAGAGSNSTSEAVELAQHAEKAGADAILVVTPYYNKPNQKGLYTHFSSIAKAISIPVIIYNIPGRSVIDMAVETMRDLCQDFKNIIGVKDATSKIGRVSEQREKCGKDFIQLSGDDCIALGFNAHGGVGCISVSSNVAPKLCAELHAACFRGDYETALKLNDLLMPLNRAVFIEPSPAGIKYAAAKLGLCGSLVRSPIVPLAETTKKIIDAALHHAGLLKE.

Thr45 contributes to the pyruvate binding site. The active-site Proton donor/acceptor is Tyr133. Lys162 functions as the Schiff-base intermediate with substrate in the catalytic mechanism. Ile204 lines the pyruvate pocket.

This sequence belongs to the DapA family. In terms of assembly, homotetramer; dimer of dimers.

It is found in the cytoplasm. The catalysed reaction is L-aspartate 4-semialdehyde + pyruvate = (2S,4S)-4-hydroxy-2,3,4,5-tetrahydrodipicolinate + H2O + H(+). It functions in the pathway amino-acid biosynthesis; L-lysine biosynthesis via DAP pathway; (S)-tetrahydrodipicolinate from L-aspartate: step 3/4. Catalyzes the condensation of (S)-aspartate-beta-semialdehyde [(S)-ASA] and pyruvate to 4-hydroxy-tetrahydrodipicolinate (HTPA). The protein is 4-hydroxy-tetrahydrodipicolinate synthase of Bartonella quintana (strain Toulouse) (Rochalimaea quintana).